The primary structure comprises 354 residues: Ferrochelatase (354 aa).

Residues H214 and E295 each contribute to the Fe cation site.

It belongs to the ferrochelatase family.

Its subcellular location is the cytoplasm. The enzyme catalyses heme b + 2 H(+) = protoporphyrin IX + Fe(2+). It participates in porphyrin-containing compound metabolism; protoheme biosynthesis; protoheme from protoporphyrin-IX: step 1/1. Catalyzes the ferrous insertion into protoporphyrin IX. This is Ferrochelatase from Burkholderia lata (strain ATCC 17760 / DSM 23089 / LMG 22485 / NCIMB 9086 / R18194 / 383).